Reading from the N-terminus, the 208-residue chain is Component of Sp100-rs (208 aa).

An HSR domain is found at 6–121 (GSPRMSTEQE…LRRSFECGAK (116 aa)).

In Mus musculus (Mouse), this protein is Component of Sp100-rs (Csprs).